The following is a 372-amino-acid chain: Cytochrome b (372 aa).

The next 4 helical transmembrane spans lie at 25-45 (FGSM…FLAI), 69-90 (WIMQ…YIHI), 105-125 (WVSG…GYVL), and 170-190 (FFAL…IHVM). His75 and His89 together coordinate heme b. Heme b-binding residues include His174 and His188. His193 provides a ligand contact to a ubiquinone. Helical transmembrane passes span 218 to 238 (YKDT…TSFF), 280 to 300 (LGGT…PFTH), 312 to 332 (MAQV…WAAT), and 339 to 358 (FTTI…IINP).

It belongs to the cytochrome b family. The cytochrome bc1 complex contains 3 respiratory subunits (MT-CYB, CYC1 and UQCRFS1), 2 core proteins (UQCRC1 and UQCRC2) and probably 6 low-molecular weight proteins. Heme b serves as cofactor.

It localises to the mitochondrion inner membrane. Its function is as follows. Component of the ubiquinol-cytochrome c reductase complex (complex III or cytochrome b-c1 complex) that is part of the mitochondrial respiratory chain. The b-c1 complex mediates electron transfer from ubiquinol to cytochrome c. Contributes to the generation of a proton gradient across the mitochondrial membrane that is then used for ATP synthesis. This chain is Cytochrome b (MT-CYB), found in Heterodon simus (Southern hognose snake).